A 101-amino-acid chain; its full sequence is Small ribosomal subunit protein uS14 (101 aa).

The interval 32–62 is disordered; the sequence is GDAKRSDAEREAARLGLQKLPRNANPTRQRN. Residues 33–44 show a composition bias toward basic and acidic residues; sequence DAKRSDAEREAA.

Belongs to the universal ribosomal protein uS14 family. Part of the 30S ribosomal subunit. Contacts proteins S3 and S10.

In terms of biological role, binds 16S rRNA, required for the assembly of 30S particles and may also be responsible for determining the conformation of the 16S rRNA at the A site. This Verminephrobacter eiseniae (strain EF01-2) protein is Small ribosomal subunit protein uS14.